We begin with the raw amino-acid sequence, 187 residues long: Oligoribonuclease (187 aa).

In terms of domain architecture, Exonuclease spans 7–170 (LIWIDLEMTG…DDIKDSINEL (164 aa)). The active site involves Tyr128.

It belongs to the oligoribonuclease family.

The protein localises to the cytoplasm. 3'-to-5' exoribonuclease specific for small oligoribonucleotides. In Legionella pneumophila (strain Paris), this protein is Oligoribonuclease.